Consider the following 207-residue polypeptide: Large ribosomal subunit protein uL3c (207 aa).

A disordered region spans residues 128-148 (FTRGPMTHGSKNHRAPGSIGM).

The protein belongs to the universal ribosomal protein uL3 family. Part of the 50S ribosomal subunit.

The protein resides in the plastid. The protein localises to the chloroplast. In terms of biological role, one of the primary rRNA binding proteins, it binds directly near the 3'-end of the 23S rRNA, where it nucleates assembly of the 50S subunit. This Trieres chinensis (Marine centric diatom) protein is Large ribosomal subunit protein uL3c (rpl3).